Consider the following 119-residue polypeptide: Dihydroneopterin aldolase (119 aa).

Substrate contacts are provided by residues Glu-21, Tyr-53, and 72–73; that span reads IE. Catalysis depends on Lys-99, which acts as the Proton donor/acceptor.

It belongs to the DHNA family.

The enzyme catalyses 7,8-dihydroneopterin = 6-hydroxymethyl-7,8-dihydropterin + glycolaldehyde. The protein operates within cofactor biosynthesis; tetrahydrofolate biosynthesis; 2-amino-4-hydroxy-6-hydroxymethyl-7,8-dihydropteridine diphosphate from 7,8-dihydroneopterin triphosphate: step 3/4. Catalyzes the conversion of 7,8-dihydroneopterin to 6-hydroxymethyl-7,8-dihydropterin. In Streptococcus pyogenes serotype M6 (strain ATCC BAA-946 / MGAS10394), this protein is Dihydroneopterin aldolase (folB).